The chain runs to 72 residues: Hypotensin-1 (72 aa).

Residues 1 to 24 form the signal peptide; sequence MKMMIPVIFSILLLIFSLSSTAMS. Residues 25–35 constitute a propeptide that is removed on maturation; sequence LEDEQENMEER. A Phosphoserine modification is found at serine 41. Residues 53–72 are disordered; sequence ETNAKPPARFDPAAFEKSDD. The propeptide occupies 61–72; it reads RFDPAAFEKSDD.

Belongs to the non-disulfide-bridged peptide (NDBP) superfamily. Undergoes enzymatic cleavages by carboxypeptidases, endopeptidases, and aminopeptidases resulting in at least 46 fragments of this protein. In terms of tissue distribution, expressed by the venom gland.

The protein localises to the secreted. Agonist of the B2 bradykinin receptor (BDKRB2). Potentiates the hypotensive effect of bradykinin (BK) and induces a direct vasorelaxing effect independent of BK, by endothelium- and nitric oxide (NO)-dependent mechanisms in rat aortic ring preparations. Also exerts proangiogenic, antiinflammatory, and antifibrogenic activities. Does not inhibit the angiotensin-converting enzyme (ACE) but increases its activity, and inhibits neprilysin (NEP) in a non-competitive manner. Exerts intermediate cytotoxicity and pro-inflammatory effects on mouse macrophages, and increases the phagocytic activity of these murine cells. Functionally, presents moderate hemolytic activity at physiological concentrations (micromolar range). Does not induce mast cell degranulation, lactate dehydrogenase (LDH) release from mast cells and antimicrobial effects. In vivo, causes intense pain (but no edema formation), when injected in mice hind paws. Also induces discomfort and anxiety in mice, as it moderately diminishes locomotion and moderately increases rearing behavior. The protein is Hypotensin-1 of Tityus serrulatus (Brazilian scorpion).